We begin with the raw amino-acid sequence, 552 residues long: Elongator complex protein 3 (552 aa).

The region spanning 84–374 (RTASGIAVVA…YRVQRDIPMP (291 aa)) is the Radical SAM core domain. Positions 101, 111, and 114 each coordinate [4Fe-4S] cluster. Acetyl-CoA is bound by residues K166, 476–479 (ELHV), 499–501 (FGM), and Y532. Residues 398–552 (TTCRDVRTRE…YMSKSIEENN (155 aa)) form the N-acetyltransferase domain.

It belongs to the ELP3 family. In terms of assembly, component of the elongator complex composed of Elp1, Elp2, Elp3, Elp4, Elp5 and Elp6. The elongator complex associates with and stabilizes microtubules; efficient interaction requires the full complex. [4Fe-4S] cluster serves as cofactor.

Its subcellular location is the cytoplasm. The protein resides in the nucleus. It is found in the cytoskeleton. The protein localises to the spindle. The enzyme catalyses uridine(34) in tRNA + acetyl-CoA + S-adenosyl-L-methionine + H2O = 5-(carboxymethyl)uridine(34) in tRNA + 5'-deoxyadenosine + L-methionine + CoA + 2 H(+). It participates in tRNA modification; 5-methoxycarbonylmethyl-2-thiouridine-tRNA biosynthesis. Catalytic tRNA acetyltransferase subunit of the elongator complex, which is required for multiple tRNA modifications, including mcm5U (5-methoxycarbonylmethyl uridine), mcm5s2U (5-methoxycarbonylmethyl-2-thiouridine), and ncm5U (5-carbamoylmethyl uridine). In the elongator complex, acts as a tRNA uridine(34) acetyltransferase by mediating formation of carboxymethyluridine in the wobble base at position 34 in tRNAs. Binding by the elongator complex stabilizes microtubules and promotes their growth. This induces central spindle asymmetry, promoting polarized signaling endosome trafficking during asymmetric cell division and cell fate assignation of sensory organ precursor cells. Plays a role in the control of synaptic bouton expansion. Required for larval development. Involved in protein synthesis-dependent long-term memory formation, probably as part of the elongator complex. This chain is Elongator complex protein 3, found in Drosophila melanogaster (Fruit fly).